Here is a 171-residue protein sequence, read N- to C-terminus: 3-hydroxydecanoyl-[acyl-carrier-protein] dehydratase (171 aa).

His-70 is an active-site residue.

It belongs to the thioester dehydratase family. FabA subfamily. As to quaternary structure, homodimer.

The protein resides in the cytoplasm. It carries out the reaction a (3R)-hydroxyacyl-[ACP] = a (2E)-enoyl-[ACP] + H2O. It catalyses the reaction (3R)-hydroxydecanoyl-[ACP] = (2E)-decenoyl-[ACP] + H2O. The catalysed reaction is (2E)-decenoyl-[ACP] = (3Z)-decenoyl-[ACP]. It functions in the pathway lipid metabolism; fatty acid biosynthesis. Its function is as follows. Necessary for the introduction of cis unsaturation into fatty acids. Catalyzes the dehydration of (3R)-3-hydroxydecanoyl-ACP to E-(2)-decenoyl-ACP and then its isomerization to Z-(3)-decenoyl-ACP. Can catalyze the dehydratase reaction for beta-hydroxyacyl-ACPs with saturated chain lengths up to 16:0, being most active on intermediate chain length. The sequence is that of 3-hydroxydecanoyl-[acyl-carrier-protein] dehydratase from Colwellia psychrerythraea (strain 34H / ATCC BAA-681) (Vibrio psychroerythus).